The following is a 93-amino-acid chain: Putative aspartate aminotransferase (93 aa).

Belongs to the class-I pyridoxal-phosphate-dependent aminotransferase family. Homodimer. Pyridoxal 5'-phosphate serves as cofactor.

Its subcellular location is the cytoplasm. It catalyses the reaction L-aspartate + 2-oxoglutarate = oxaloacetate + L-glutamate. In Methylorubrum extorquens (Methylobacterium dichloromethanicum), this protein is Putative aspartate aminotransferase.